A 196-amino-acid polypeptide reads, in one-letter code: Serine recombinase PinQ (196 aa).

Positions Gln3 to Gly143 constitute a Resolvase/invertase-type recombinase catalytic domain. Ser11 serves as the catalytic O-(5'-phospho-DNA)-serine intermediate.

The protein belongs to the site-specific recombinase resolvase family.

The protein is Serine recombinase PinQ (pinQ) of Escherichia coli (strain K12).